A 341-amino-acid chain; its full sequence is Holliday junction branch migration complex subunit RuvB (341 aa).

The interval 4 to 185 (TDRLIVPTAV…FGIVARLEFY (182 aa)) is large ATPase domain (RuvB-L). ATP contacts are provided by residues Leu24, Arg25, Gly66, Lys69, Thr70, Thr71, 132–134 (EDF), Arg175, Tyr185, and Arg222. Mg(2+) is bound at residue Thr70. Residues 186 to 256 (SAEELGYIVH…VADAALVMLD (71 aa)) form a small ATPAse domain (RuvB-S) region. A head domain (RuvB-H) region spans residues 259–341 (RAGLDVMDRK…ATPASDAELF (83 aa)). DNA contacts are provided by Arg295, Arg314, and Arg319.

This sequence belongs to the RuvB family. Homohexamer. Forms an RuvA(8)-RuvB(12)-Holliday junction (HJ) complex. HJ DNA is sandwiched between 2 RuvA tetramers; dsDNA enters through RuvA and exits via RuvB. An RuvB hexamer assembles on each DNA strand where it exits the tetramer. Each RuvB hexamer is contacted by two RuvA subunits (via domain III) on 2 adjacent RuvB subunits; this complex drives branch migration. In the full resolvosome a probable DNA-RuvA(4)-RuvB(12)-RuvC(2) complex forms which resolves the HJ.

It localises to the cytoplasm. The enzyme catalyses ATP + H2O = ADP + phosphate + H(+). Its function is as follows. The RuvA-RuvB-RuvC complex processes Holliday junction (HJ) DNA during genetic recombination and DNA repair, while the RuvA-RuvB complex plays an important role in the rescue of blocked DNA replication forks via replication fork reversal (RFR). RuvA specifically binds to HJ cruciform DNA, conferring on it an open structure. The RuvB hexamer acts as an ATP-dependent pump, pulling dsDNA into and through the RuvAB complex. RuvB forms 2 homohexamers on either side of HJ DNA bound by 1 or 2 RuvA tetramers; 4 subunits per hexamer contact DNA at a time. Coordinated motions by a converter formed by DNA-disengaged RuvB subunits stimulates ATP hydrolysis and nucleotide exchange. Immobilization of the converter enables RuvB to convert the ATP-contained energy into a lever motion, pulling 2 nucleotides of DNA out of the RuvA tetramer per ATP hydrolyzed, thus driving DNA branch migration. The RuvB motors rotate together with the DNA substrate, which together with the progressing nucleotide cycle form the mechanistic basis for DNA recombination by continuous HJ branch migration. Branch migration allows RuvC to scan DNA until it finds its consensus sequence, where it cleaves and resolves cruciform DNA. The sequence is that of Holliday junction branch migration complex subunit RuvB from Thiobacillus denitrificans (strain ATCC 25259 / T1).